A 218-amino-acid chain; its full sequence is Protein-methionine-sulfoxide reductase heme-binding subunit MsrQ (218 aa).

5 helical membrane passes run 14–34 (AVHA…WQVW), 60–80 (LLLI…AVLI), 86–106 (LGLY…WLDL), 121–141 (PYIT…ITST), and 155–175 (LHML…WLVK).

Belongs to the MsrQ family. Heterodimer of a catalytic subunit (MsrP) and a heme-binding subunit (MsrQ). Requires FMN as cofactor. Heme b serves as cofactor.

It is found in the cell inner membrane. In terms of biological role, part of the MsrPQ system that repairs oxidized periplasmic proteins containing methionine sulfoxide residues (Met-O), using respiratory chain electrons. Thus protects these proteins from oxidative-stress damage caused by reactive species of oxygen and chlorine generated by the host defense mechanisms. MsrPQ is essential for the maintenance of envelope integrity under bleach stress, rescuing a wide series of structurally unrelated periplasmic proteins from methionine oxidation. MsrQ provides electrons for reduction to the reductase catalytic subunit MsrP, using the quinone pool of the respiratory chain. This Xanthomonas campestris pv. campestris (strain 8004) protein is Protein-methionine-sulfoxide reductase heme-binding subunit MsrQ.